We begin with the raw amino-acid sequence, 130 residues long: Large ribosomal subunit protein bL19 (130 aa).

It belongs to the bacterial ribosomal protein bL19 family.

In terms of biological role, this protein is located at the 30S-50S ribosomal subunit interface and may play a role in the structure and function of the aminoacyl-tRNA binding site. This is Large ribosomal subunit protein bL19 from Burkholderia ambifaria (strain ATCC BAA-244 / DSM 16087 / CCUG 44356 / LMG 19182 / AMMD) (Burkholderia cepacia (strain AMMD)).